The sequence spans 147 residues: Basic phospholipase A2 beta-bungarotoxin A2 chain (147 aa).

The N-terminal stretch at 1–19 (MYPAHLLVLSAVCVSLLGA) is a signal peptide. Residues 20–27 (ANIPPYPL) constitute a propeptide that is removed on maturation. 6 disulfide bridges follow: Cys54–Cys146, Cys56–Cys72, Cys71–Cys127, Cys78–Cys120, Cys88–Cys113, and Cys106–Cys118. Residues Tyr55, Gly57, and Gly59 each contribute to the Ca(2+) site. His75 is an active-site residue. Residue Asp76 participates in Ca(2+) binding. Residue Asp121 is part of the active site.

This sequence belongs to the phospholipase A2 family. Group I subfamily. D49 sub-subfamily. As to quaternary structure, heterodimer; disulfide-linked. The A chains have phospholipase A2 activity and the B chains show homology with the basic protease inhibitors. Ca(2+) serves as cofactor. In terms of tissue distribution, expressed by the venom gland.

It localises to the secreted. It catalyses the reaction a 1,2-diacyl-sn-glycero-3-phosphocholine + H2O = a 1-acyl-sn-glycero-3-phosphocholine + a fatty acid + H(+). Its function is as follows. Snake venom phospholipase A2 (PLA2) that inhibits neuromuscular transmission by blocking acetylcholine release from the nerve termini. PLA2 catalyzes the calcium-dependent hydrolysis of the 2-acyl groups in 3-sn-phosphoglycerides. The sequence is that of Basic phospholipase A2 beta-bungarotoxin A2 chain from Bungarus caeruleus (Indian krait).